The primary structure comprises 41 residues: U-megalopygitoxin(11)-Mo28 (41 aa).

The N-terminal stretch at 1–29 (MRTTLLLLIIAITVMVFVSEAYAAPAPEP) is a signal peptide.

This sequence belongs to the caterpillar 11 family. Expressed by the venom apparatus.

The protein localises to the secreted. Its function is as follows. Probable toxin. The sequence is that of U-megalopygitoxin(11)-Mo28 from Megalopyge opercularis (Southern flannel moth).